The following is a 284-amino-acid chain: Spermidine/putrescine transport system permease protein PotC homolog (284 aa).

The next 6 membrane-spanning stretches (helical) occupy residues 13–33, 76–96, 116–136, 143–163, 189–209, and 242–262; these read YFFL…LVSL, IIIG…SAFA, LATP…NTWL, GFFT…LILI, FFHI…LVVF, and AWAI…VCLI. In terms of domain architecture, ABC transmembrane type-1 spans 72 to 263; that stretch reads LINSIIIGVI…ISVLGVCLIT (192 aa).

Belongs to the binding-protein-dependent transport system permease family. CysTW subfamily.

Its subcellular location is the cell membrane. Functionally, required for the activity of the bacterial transport system of putrescine and spermidine. This Mycoplasma genitalium (strain ATCC 33530 / DSM 19775 / NCTC 10195 / G37) (Mycoplasmoides genitalium) protein is Spermidine/putrescine transport system permease protein PotC homolog (potC).